The chain runs to 194 residues: Adenylate kinase isoenzyme 1 (194 aa).

At Met-1 the chain carries N-acetylmethionine. 18-23 (GSGKGT) lines the ATP pocket. Position 38 is a phosphoserine (Ser-38). The interval 38 to 67 (STGDLLRAEVSSGSARGKKLSEIMEKGQLV) is NMP. AMP is bound by residues Thr-39, Arg-44, 65-67 (QLV), 94-97 (GYPR), and Gln-101. Positions 131 to 141 (KRGETSGRVDD) are LID. Arg-132 is a binding site for ATP. AMP contacts are provided by Arg-138 and Arg-149. ATP is bound at residue Gly-177.

The protein belongs to the adenylate kinase family. AK1 subfamily. Monomer. Mg(2+) is required as a cofactor.

The protein localises to the cytoplasm. It carries out the reaction a ribonucleoside 5'-phosphate + ATP = a ribonucleoside 5'-diphosphate + ADP. The enzyme catalyses AMP + ATP = 2 ADP. The catalysed reaction is dAMP + ATP = dADP + ADP. It catalyses the reaction dATP + AMP = dADP + ADP. It carries out the reaction dAMP + dATP = 2 dADP. The enzyme catalyses a 2'-deoxyribonucleoside 5'-diphosphate + ATP = a 2'-deoxyribonucleoside 5'-triphosphate + ADP. The catalysed reaction is a ribonucleoside 5'-diphosphate + ATP = a ribonucleoside 5'-triphosphate + ADP. It catalyses the reaction CDP + GTP = CTP + GDP. It carries out the reaction GDP + ATP = GTP + ADP. The enzyme catalyses UDP + ATP = UTP + ADP. The catalysed reaction is GTP + UDP = UTP + GDP. It catalyses the reaction dTDP + GTP = dTTP + GDP. It carries out the reaction dCDP + GTP = dCTP + GDP. The enzyme catalyses dGDP + ATP = dGTP + ADP. The catalysed reaction is dADP + GTP = dATP + GDP. It catalyses the reaction thiamine diphosphate + ADP = thiamine triphosphate + AMP. Functionally, catalyzes the reversible transfer of the terminal phosphate group between ATP and AMP. Also displays broad nucleoside diphosphate kinase activity. Plays an important role in cellular energy homeostasis and in adenine nucleotide metabolism. Also catalyzes at a very low rate the synthesis of thiamine triphosphate (ThTP) from thiamine diphosphate (ThDP) and ADP. The protein is Adenylate kinase isoenzyme 1 of Oryctolagus cuniculus (Rabbit).